Reading from the N-terminus, the 398-residue chain is ORC1-type DNA replication protein 1 (398 aa).

ATP is bound by residues 67-71, Tyr208, and Arg220; that span reads TGKTA.

This sequence belongs to the CDC6/cdc18 family.

Its function is as follows. Involved in regulation of DNA replication. The chain is ORC1-type DNA replication protein 1 (cdc6-1) from Sulfurisphaera tokodaii (strain DSM 16993 / JCM 10545 / NBRC 100140 / 7) (Sulfolobus tokodaii).